We begin with the raw amino-acid sequence, 62 residues long: Small ribosomal subunit protein uS14 (62 aa).

Zn(2+) contacts are provided by Cys25, Cys28, Cys41, and Cys44.

It belongs to the universal ribosomal protein uS14 family. Zinc-binding uS14 subfamily. In terms of assembly, part of the 30S ribosomal subunit. Contacts proteins S3 and S10. Zn(2+) is required as a cofactor.

In terms of biological role, binds 16S rRNA, required for the assembly of 30S particles and may also be responsible for determining the conformation of the 16S rRNA at the A site. This chain is Small ribosomal subunit protein uS14, found in Aquifex aeolicus (strain VF5).